The primary structure comprises 306 residues: Acetylglutamate kinase (306 aa).

Residues 75 to 76, Arg-97, and Asn-197 each bind substrate; that span reads GG.

This sequence belongs to the acetylglutamate kinase family. ArgB subfamily.

It localises to the cytoplasm. It catalyses the reaction N-acetyl-L-glutamate + ATP = N-acetyl-L-glutamyl 5-phosphate + ADP. The protein operates within amino-acid biosynthesis; L-arginine biosynthesis; N(2)-acetyl-L-ornithine from L-glutamate: step 2/4. Its function is as follows. Catalyzes the ATP-dependent phosphorylation of N-acetyl-L-glutamate. This chain is Acetylglutamate kinase, found in Streptomyces coelicolor (strain ATCC BAA-471 / A3(2) / M145).